Consider the following 328-residue polypeptide: Endochitinase (328 aa).

Positions 1 to 27 (MKKNRMMMMIWSVGVVWMLLLVGGSYG) are cleaved as a signal peptide. The Chitin-binding type-1 domain maps to 28–68 (EQCGRQAGGALCPGGNCCSQFGWCGSTTDYCGPGCQSQCGG). Disulfide bonds link Cys-30-Cys-45, Cys-39-Cys-51, Cys-44-Cys-58, Cys-62-Cys-66, Cys-97-Cys-159, Cys-170-Cys-178, and Cys-277-Cys-309. Glu-141 (proton donor) is an active-site residue. Residues 318-328 (SLLLSDLVTSQ) constitute a propeptide, removed in mature form.

It belongs to the glycosyl hydrolase 19 family. Chitinase class I subfamily.

The protein localises to the vacuole. The enzyme catalyses Random endo-hydrolysis of N-acetyl-beta-D-glucosaminide (1-&gt;4)-beta-linkages in chitin and chitodextrins.. In terms of biological role, defense against chitin-containing fungal pathogens. The sequence is that of Endochitinase from Phaseolus vulgaris (Kidney bean).